The following is a 301-amino-acid chain: Homoserine O-acetyltransferase (301 aa).

Cys-142 serves as the catalytic Acyl-thioester intermediate. Residues Lys-163 and Ser-192 each contribute to the substrate site. His-235 functions as the Proton acceptor in the catalytic mechanism. Glu-237 is a catalytic residue. Arg-249 contributes to the substrate binding site.

This sequence belongs to the MetA family.

The protein localises to the cytoplasm. It catalyses the reaction L-homoserine + acetyl-CoA = O-acetyl-L-homoserine + CoA. The protein operates within amino-acid biosynthesis; L-methionine biosynthesis via de novo pathway; O-acetyl-L-homoserine from L-homoserine: step 1/1. Functionally, transfers an acetyl group from acetyl-CoA to L-homoserine, forming acetyl-L-homoserine. This chain is Homoserine O-acetyltransferase, found in Bacillus mycoides (strain KBAB4) (Bacillus weihenstephanensis).